The primary structure comprises 117 residues: Immunoglobulin lambda variable 7-46 (117 aa).

A signal peptide spans 1 to 19 (MAWTPLFLFLLTCCPGSNS). Residues 20 to 44 (QAVVTQEPSLTVSPGGTVTLTCGSS) form a framework-1 region. Residues 20 to 117 (QAVVTQEPSL…YCLLSYSGAR (98 aa)) form the Ig-like domain. Cysteine 41 and cysteine 109 are joined by a disulfide. The interval 45–53 (TGAVTSGHY) is complementarity-determining-1. The segment at 54-70 (PYWFQQKPGQAPRTLIY) is framework-2. The tract at residues 71–73 (DTS) is complementarity-determining-2. Residues 74-109 (NKHSWTPARFSGSLLGGKAALTLLGAQPEDEAEYYC) are framework-3. The segment at 110 to 117 (LLSYSGAR) is complementarity-determining-3.

In terms of assembly, immunoglobulins are composed of two identical heavy chains and two identical light chains; disulfide-linked.

The protein resides in the secreted. It is found in the cell membrane. V region of the variable domain of immunoglobulin light chains that participates in the antigen recognition. Immunoglobulins, also known as antibodies, are membrane-bound or secreted glycoproteins produced by B lymphocytes. In the recognition phase of humoral immunity, the membrane-bound immunoglobulins serve as receptors which, upon binding of a specific antigen, trigger the clonal expansion and differentiation of B lymphocytes into immunoglobulins-secreting plasma cells. Secreted immunoglobulins mediate the effector phase of humoral immunity, which results in the elimination of bound antigens. The antigen binding site is formed by the variable domain of one heavy chain, together with that of its associated light chain. Thus, each immunoglobulin has two antigen binding sites with remarkable affinity for a particular antigen. The variable domains are assembled by a process called V-(D)-J rearrangement and can then be subjected to somatic hypermutations which, after exposure to antigen and selection, allow affinity maturation for a particular antigen. The chain is Immunoglobulin lambda variable 7-46 from Homo sapiens (Human).